Consider the following 803-residue polypeptide: Phenylalanine--tRNA ligase beta subunit (803 aa).

Residues 39–150 (AKVLAPFTIA…ADAPVGAAYA (112 aa)) enclose the tRNA-binding domain. One can recognise a B5 domain in the interval 400 to 475 (ADDKIIDFPL…RIVGVDKVPL (76 aa)). 4 residues coordinate Mg(2+): Asp-453, Asp-459, Glu-462, and Glu-463. Residues 709-802 (SAFHPVSRDF…VTKKTGGSLR (94 aa)) form the FDX-ACB domain.

Belongs to the phenylalanyl-tRNA synthetase beta subunit family. Type 1 subfamily. Tetramer of two alpha and two beta subunits. Mg(2+) serves as cofactor.

Its subcellular location is the cytoplasm. It carries out the reaction tRNA(Phe) + L-phenylalanine + ATP = L-phenylalanyl-tRNA(Phe) + AMP + diphosphate + H(+). In Rhodopseudomonas palustris (strain ATCC BAA-98 / CGA009), this protein is Phenylalanine--tRNA ligase beta subunit.